We begin with the raw amino-acid sequence, 132 residues long: D-ribose pyranase (132 aa).

Histidine 20 functions as the Proton donor in the catalytic mechanism. Substrate is bound by residues aspartate 28, histidine 99, and 121-123 (YSN).

This sequence belongs to the RbsD / FucU family. RbsD subfamily. Homodecamer.

The protein resides in the cytoplasm. The enzyme catalyses beta-D-ribopyranose = beta-D-ribofuranose. The protein operates within carbohydrate metabolism; D-ribose degradation; D-ribose 5-phosphate from beta-D-ribopyranose: step 1/2. Its function is as follows. Catalyzes the interconversion of beta-pyran and beta-furan forms of D-ribose. The protein is D-ribose pyranase of Lactococcus lactis subsp. lactis (strain IL1403) (Streptococcus lactis).